A 337-amino-acid polypeptide reads, in one-letter code: Anthranilate phosphoribosyltransferase (337 aa).

Residues G82, 85-86, T90, 92-95, 110-118, and S122 each bind 5-phospho-alpha-D-ribose 1-diphosphate; these read GD, NIST, and KHGGRSVSS. Position 82 (G82) interacts with anthranilate. Mg(2+) is bound at residue S94. R168 contributes to the anthranilate binding site. The Mg(2+) site is built by D226 and E227.

It belongs to the anthranilate phosphoribosyltransferase family. As to quaternary structure, homodimer. Mg(2+) is required as a cofactor.

The catalysed reaction is N-(5-phospho-beta-D-ribosyl)anthranilate + diphosphate = 5-phospho-alpha-D-ribose 1-diphosphate + anthranilate. Its pathway is amino-acid biosynthesis; L-tryptophan biosynthesis; L-tryptophan from chorismate: step 2/5. In terms of biological role, catalyzes the transfer of the phosphoribosyl group of 5-phosphorylribose-1-pyrophosphate (PRPP) to anthranilate to yield N-(5'-phosphoribosyl)-anthranilate (PRA). The protein is Anthranilate phosphoribosyltransferase of Francisella tularensis subsp. novicida (strain U112).